We begin with the raw amino-acid sequence, 541 residues long: Glutamyl-tRNA(Gln) amidotransferase subunit B, mitochondrial (541 aa).

It belongs to the GatB/GatE family. GatB subfamily. In terms of assembly, subunit of the heterotrimeric GatFAB amidotransferase (AdT) complex, composed of A, B and F subunits.

Its subcellular location is the mitochondrion. The catalysed reaction is L-glutamyl-tRNA(Gln) + L-glutamine + ATP + H2O = L-glutaminyl-tRNA(Gln) + L-glutamate + ADP + phosphate + H(+). In terms of biological role, allows the formation of correctly charged Gln-tRNA(Gln) through the transamidation of misacylated Glu-tRNA(Gln) in the mitochondria. The reaction takes place in the presence of glutamine and ATP through an activated gamma-phospho-Glu-tRNA(Gln). This chain is Glutamyl-tRNA(Gln) amidotransferase subunit B, mitochondrial, found in Saccharomyces cerevisiae (strain RM11-1a) (Baker's yeast).